Here is a 210-residue protein sequence, read N- to C-terminus: Cytochrome c biogenesis ATP-binding export protein CcmA (210 aa).

The region spanning 3-205 (LHLQAAGLAC…KPSGYRELNL (203 aa)) is the ABC transporter domain. Residue 37-44 (GPNGSGKT) coordinates ATP.

This sequence belongs to the ABC transporter superfamily. CcmA exporter (TC 3.A.1.107) family. The complex is composed of two ATP-binding proteins (CcmA) and two transmembrane proteins (CcmB).

It is found in the cell inner membrane. The enzyme catalyses heme b(in) + ATP + H2O = heme b(out) + ADP + phosphate + H(+). Its function is as follows. Part of the ABC transporter complex CcmAB involved in the biogenesis of c-type cytochromes; once thought to export heme, this seems not to be the case, but its exact role is uncertain. Responsible for energy coupling to the transport system. In Pseudomonas putida (strain GB-1), this protein is Cytochrome c biogenesis ATP-binding export protein CcmA.